The chain runs to 670 residues: Histone-lysine N-methyltransferase, H3 lysine-9 specific SUVH1 (670 aa).

The segment at 53 to 140 (YPFSSSQANQ…RPISRPENMN (88 aa)) is disordered. Residues 68–79 (NQAQYPPQHQQP) show a composition bias toward low complexity. A compositionally biased stretch (basic residues) spans 123–133 (VKRRIPKKRPI). The 147-residue stretch at 211–357 (GIVPGVEIGD…HNTFKYKLVR (147 aa)) folds into the YDG domain. The Pre-SET domain occupies 432-492 (FGCDCANLCK…TCKNKVTQMG (61 aa)). 9 residues coordinate Zn(2+): cysteine 434, cysteine 436, cysteine 440, cysteine 447, cysteine 449, cysteine 475, cysteine 479, cysteine 481, and cysteine 484. One can recognise an SET domain in the interval 495-639 (VRLEVFKTAN…PMTELTYDYG (145 aa)). S-adenosyl-L-methionine-binding positions include 505 to 507 (RGW), aspartate 541, tyrosine 543, arginine 593, and 596 to 597 (NH). Residues cysteine 599, cysteine 658, cysteine 660, and cysteine 665 each coordinate Zn(2+). In terms of domain architecture, Post-SET spans 654 to 670 (GKRKCFCGSAYCRGSFG).

Belongs to the class V-like SAM-binding methyltransferase superfamily. Histone-lysine methyltransferase family. Suvar3-9 subfamily. In terms of tissue distribution, expressed in leaves stems and flowers.

Its subcellular location is the nucleus. It localises to the chromosome. The protein resides in the centromere. It carries out the reaction L-lysyl(9)-[histone H3] + 2 S-adenosyl-L-methionine = N(6),N(6)-dimethyl-L-lysyl(9)-[histone H3] + 2 S-adenosyl-L-homocysteine + 2 H(+). In terms of biological role, histone methyltransferase. Methylates 'Lys-9' of histone H3. H3 'Lys-9' methylation represents a specific tag for epigenetic transcriptional repression. The polypeptide is Histone-lysine N-methyltransferase, H3 lysine-9 specific SUVH1 (SUVH1) (Arabidopsis thaliana (Mouse-ear cress)).